Reading from the N-terminus, the 535-residue chain is CTP synthase (535 aa).

An amidoligase domain region spans residues 1–267 (MTKYIFVTGG…DQIVCDHLKL (267 aa)). Ser-13 contributes to the CTP binding site. Position 13 (Ser-13) interacts with UTP. Residue 14–19 (SLGKGI) participates in ATP binding. Tyr-54 lines the L-glutamine pocket. Asp-71 contributes to the ATP binding site. Positions 71 and 141 each coordinate Mg(2+). CTP is bound by residues 148 to 150 (DIE), 188 to 193 (KTKPTQ), and Lys-224. Residues 188–193 (KTKPTQ) and Lys-224 contribute to the UTP site. An ATP-binding site is contributed by 240 to 242 (RDA). The region spanning 292–534 (KIALVGKYVE…VRASITNKES (243 aa)) is the Glutamine amidotransferase type-1 domain. Gly-354 lines the L-glutamine pocket. Cys-381 acts as the Nucleophile; for glutamine hydrolysis in catalysis. L-glutamine contacts are provided by residues 382–385 (LGMQ), Glu-405, and Arg-462. Catalysis depends on residues His-507 and Glu-509.

It belongs to the CTP synthase family. Homotetramer.

It catalyses the reaction UTP + L-glutamine + ATP + H2O = CTP + L-glutamate + ADP + phosphate + 2 H(+). The catalysed reaction is L-glutamine + H2O = L-glutamate + NH4(+). It carries out the reaction UTP + NH4(+) + ATP = CTP + ADP + phosphate + 2 H(+). The protein operates within pyrimidine metabolism; CTP biosynthesis via de novo pathway; CTP from UDP: step 2/2. Its activity is regulated as follows. Allosterically activated by GTP, when glutamine is the substrate; GTP has no effect on the reaction when ammonia is the substrate. The allosteric effector GTP functions by stabilizing the protein conformation that binds the tetrahedral intermediate(s) formed during glutamine hydrolysis. Inhibited by the product CTP, via allosteric rather than competitive inhibition. Catalyzes the ATP-dependent amination of UTP to CTP with either L-glutamine or ammonia as the source of nitrogen. Regulates intracellular CTP levels through interactions with the four ribonucleotide triphosphates. The chain is CTP synthase from Bacillus cereus (strain AH820).